A 301-amino-acid chain; its full sequence is uncharacterized protein (301 aa).

Residues glutamate 146, glutamate 148, and aspartate 177 each coordinate a divalent metal cation.

The protein belongs to the FAH family.

This is an uncharacterized protein from Staphylococcus epidermidis (strain ATCC 12228 / FDA PCI 1200).